Here is a 180-residue protein sequence, read N- to C-terminus: Large ribosomal subunit protein uL5 (180 aa).

It belongs to the universal ribosomal protein uL5 family. As to quaternary structure, part of the 50S ribosomal subunit; part of the 5S rRNA/L5/L18/L25 subcomplex. Contacts the 5S rRNA and the P site tRNA. Forms a bridge to the 30S subunit in the 70S ribosome.

In terms of biological role, this is one of the proteins that bind and probably mediate the attachment of the 5S RNA into the large ribosomal subunit, where it forms part of the central protuberance. In the 70S ribosome it contacts protein S13 of the 30S subunit (bridge B1b), connecting the 2 subunits; this bridge is implicated in subunit movement. Contacts the P site tRNA; the 5S rRNA and some of its associated proteins might help stabilize positioning of ribosome-bound tRNAs. This chain is Large ribosomal subunit protein uL5, found in Synechococcus sp. (strain JA-2-3B'a(2-13)) (Cyanobacteria bacterium Yellowstone B-Prime).